A 509-amino-acid chain; its full sequence is Maturase K (509 aa).

This sequence belongs to the intron maturase 2 family. MatK subfamily.

It localises to the plastid. The protein resides in the chloroplast. In terms of biological role, usually encoded in the trnK tRNA gene intron. Probably assists in splicing its own and other chloroplast group II introns. This chain is Maturase K, found in Eucommia ulmoides (Hardy rubber tree).